A 401-amino-acid polypeptide reads, in one-letter code: NADH-dependent flavin oxidoreductase iliE (401 aa).

FMN-binding positions include 25–28 (ASMS) and Gln107. 188–191 (HAAH) is a binding site for substrate. Residue 346-347 (AR) coordinates FMN.

It belongs to the NADH:flavin oxidoreductase/NADH oxidase family.

NADH-dependent flavin oxidoreductase; part of the gene cluster that mediates the biosynthesis of ilicicolin H, a 4-hydroxy-2-pyridonealkaloid that has potent and broad antifungal activities by inhibiting the mitochondrial respiration chain. The biosynthesis of ilicicolin H starts with formation of the tetramic acid by the hybrid PKS-NRPS synthetase iliA with the partnering trans-enoyl reductase iliB since iliA lacks a designated enoylreductase (ER) domain. The cytochrome P450 monooxygenase iliC then catalyzes the ring expansion of the tetramate to the acyclic 2-pyridone. The pericyclase iliD further converts the acyclic 2-pyridone into 8-epi-ilicicolin H. 8-epi-ilicicolin H might then spontaneously convert to ilicicolin H since ilicicolin H is produced in the absence of the epimerase iliE, in contrast to what was observed for the Talaromyces variabilis ilicolin H biosynthetic pathway. The sequence is that of NADH-dependent flavin oxidoreductase iliE from Hypocrea jecorina (strain QM6a) (Trichoderma reesei).